The chain runs to 364 residues: D-alanine--D-alanine ligase (364 aa).

An ATP-grasp domain is found at 134-344 (KVLLKSFNIP…YESLVDKLIT (211 aa)). 167-222 (NNKLNYPVIVKPSVLGSSIGINVAYNVSQIEKYIEEAFEYDLTVVVEKFIKAREIE) contacts ATP. Positions 297, 311, and 313 each coordinate Mg(2+).

Belongs to the D-alanine--D-alanine ligase family. It depends on Mg(2+) as a cofactor. Mn(2+) is required as a cofactor.

Its subcellular location is the cytoplasm. The catalysed reaction is 2 D-alanine + ATP = D-alanyl-D-alanine + ADP + phosphate + H(+). Its pathway is cell wall biogenesis; peptidoglycan biosynthesis. Functionally, cell wall formation. The polypeptide is D-alanine--D-alanine ligase (Borrelia recurrentis (strain A1)).